The following is a 597-amino-acid chain: UvrABC system protein C (597 aa).

Residues 15 to 93 (DNPGVYQYYD…IKTLQPRYNV (79 aa)) form the GIY-YIG domain. Residues 207 to 242 (KESLKDFKKLMNNYAQNLQFEEAQKIKEKIEVLENY) enclose the UVR domain.

The protein belongs to the UvrC family. In terms of assembly, interacts with UvrB in an incision complex.

It is found in the cytoplasm. Its function is as follows. The UvrABC repair system catalyzes the recognition and processing of DNA lesions. UvrC both incises the 5' and 3' sides of the lesion. The N-terminal half is responsible for the 3' incision and the C-terminal half is responsible for the 5' incision. This is UvrABC system protein C from Flavobacterium johnsoniae (strain ATCC 17061 / DSM 2064 / JCM 8514 / BCRC 14874 / CCUG 350202 / NBRC 14942 / NCIMB 11054 / UW101) (Cytophaga johnsonae).